Reading from the N-terminus, the 310-residue chain is N-acyl-aromatic-L-amino acid amidohydrolase (carboxylate-forming) (310 aa).

2 residues coordinate Zn(2+): His-20 and Glu-23. Substrate contacts are provided by residues Arg-62 and 69–70 (NR). Zn(2+) is bound at residue His-113. 2 residues coordinate substrate: Glu-176 and Tyr-286.

The protein belongs to the AspA/AstE family. Aspartoacylase subfamily. In terms of assembly, homotetramer. The cofactor is Zn(2+).

Its subcellular location is the apical cell membrane. It is found in the cytoplasm. The enzyme catalyses an N-acyl-aromatic L-alpha-amino acid + H2O = an aromatic L-alpha-amino acid + a carboxylate. The catalysed reaction is an N-acetyl-L-cysteine-S-conjugate + H2O = an S-substituted L-cysteine + acetate. Its function is as follows. Plays an important role in deacetylating mercapturic acids in kidney proximal tubules. This Xenopus tropicalis (Western clawed frog) protein is N-acyl-aromatic-L-amino acid amidohydrolase (carboxylate-forming) (acy3).